The primary structure comprises 156 residues: MSNQTVSELKVLTAKSATNYGFDVTDFKMFTHLNPLSIQVNIRHKNPDKKVTIDDCSILSQYIDEAIQGSSILDQPFNLEISSEGIGDFLTEEKDFQTFKGFPVEVSYQDLKKIEQQINGLLLKRTDNELHINQKGKTQRIPVEDVIQVRLATPSG.

It belongs to the RimP family.

The protein localises to the cytoplasm. Its function is as follows. Required for maturation of 30S ribosomal subunits. The chain is Ribosome maturation factor RimP from Prochlorococcus marinus (strain NATL2A).